We begin with the raw amino-acid sequence, 2618 residues long: Mediator of RNA polymerase II transcription subunit 13 (2618 aa).

Low complexity-rich tracts occupy residues 232-255 (FAAA…VPNP), 509-519 (TPASGTGSLSA), and 532-543 (DSKQLVQQQIQQ). Disordered regions lie at residues 232–279 (FAAA…AAPP), 509–543 (TPAS…QIQQ), 569–731 (GNTP…SGGP), 916–957 (LNIK…AEGL), 970–995 (TSSN…NGGC), 1036–1055 (TKMF…SSPC), 1268–1384 (PRTP…TGVV), 1521–1557 (ASAS…ITGY), 1614–1633 (SRKN…LDKI), and 1985–2060 (KTLL…GETK). A phosphothreonine mark is found at Thr571 and Thr575. Composition is skewed to polar residues over residues 581-590 (STYSRNSLGG), 634-643 (APTSVSNLQQ), and 669-681 (SITA…QTPS). The span at 692–706 (AGGGPAGGQGLGTGP) shows a compositional bias: gly residues. Residues 711–723 (AQQPATPTAATSA) are compositionally biased toward low complexity. Positions 939–949 (NSSGGGSGSGG) are enriched in gly residues. Polar residues predominate over residues 1272 to 1295 (LTPSTVPQPLSSGGSQYLLNQLNC). Gly residues-rich tracts occupy residues 1375-1384 (GLGGGATGVV) and 1528-1538 (AGSGHGHGPNG). Residues 1539–1553 (GSNSSSCTPPSSNPH) show a composition bias toward low complexity. Over residues 1614–1629 (SRKNQNKQGPGETSSA) the composition is skewed to polar residues. The span at 1993–2014 (GSGNSHSKGGSSCSSNSSSVSG) shows a compositional bias: low complexity. 2 positions are modified to phosphoserine: Ser2472 and Ser2475.

The protein belongs to the Mediator complex subunit 13 family. As to quaternary structure, component of the Cdk8 module of the Mediator complex, composed of CycC, Cdk8, kto and skd.

The protein localises to the nucleus. Component of the Mediator complex, a coactivator involved in the regulated transcription of nearly all RNA polymerase II-dependent genes. Mediator functions as a bridge to convey information from gene-specific regulatory proteins to the basal RNA polymerase II transcription machinery. Mediator is recruited to promoters by direct interactions with regulatory proteins and serves as a scaffold for the assembly of a functional preinitiation complex with RNA polymerase II and the general transcription factors. Required for leg and eye development and macrochaete specification or differentiation. Negatively regulates sex comb development. Required for activated transcription of the MtnB and MtnD genes. This Drosophila melanogaster (Fruit fly) protein is Mediator of RNA polymerase II transcription subunit 13 (skd).